The primary structure comprises 52 residues: Creatine kinase B-type (52 aa).

In terms of domain architecture, Phosphagen kinase C-terminal spans 1–52 (AKVLTLDLYKKLRDKSTPSGFTLDDIIQNEHLGYVLTCPSNLGTXLRAXVHV). The 52-residue stretch at 1 to 52 (AKVLTLDLYKKLRDKSTPSGFTLDDIIQNEHLGYVLTCPSNLGTXLRAXVHV) folds into the Phosphagen kinase N-terminal domain. ATP is bound by residues arginine 13 and arginine 47.

This sequence belongs to the ATP:guanido phosphotransferase family. As to quaternary structure, dimer of identical or non-identical chains, which can be either B (brain type) or M (muscle type). With MM being the major form in skeletal muscle and myocardium, MB existing in myocardium, and BB existing in many tissues, especially brain. In terms of tissue distribution, expressed in rectal gland, brain, skeletal muscle (at protein level).

It localises to the cytoplasm. The protein resides in the cytosol. Its subcellular location is the mitochondrion. It is found in the basal cell membrane. The catalysed reaction is creatine + ATP = N-phosphocreatine + ADP + H(+). Its function is as follows. Reversibly catalyzes the transfer of phosphate between ATP and various phosphogens (e.g. creatine phosphate). Creatine kinase isoenzymes play a central role in energy transduction in tissues with large, fluctuating energy demands, such as skeletal muscle, heart, brain and spermatozoa. This chain is Creatine kinase B-type, found in Squalus acanthias (Spiny dogfish).